The primary structure comprises 126 residues: Holo-[acyl-carrier-protein] synthase (126 aa).

Positions 9 and 58 each coordinate Mg(2+).

The protein belongs to the P-Pant transferase superfamily. AcpS family. The cofactor is Mg(2+).

It is found in the cytoplasm. The catalysed reaction is apo-[ACP] + CoA = holo-[ACP] + adenosine 3',5'-bisphosphate + H(+). In terms of biological role, transfers the 4'-phosphopantetheine moiety from coenzyme A to a Ser of acyl-carrier-protein. This Pectobacterium carotovorum subsp. carotovorum (strain PC1) protein is Holo-[acyl-carrier-protein] synthase.